The sequence spans 189 residues: Probable nicotinate-nucleotide adenylyltransferase (189 aa).

It belongs to the NadD family.

It carries out the reaction nicotinate beta-D-ribonucleotide + ATP + H(+) = deamido-NAD(+) + diphosphate. It functions in the pathway cofactor biosynthesis; NAD(+) biosynthesis; deamido-NAD(+) from nicotinate D-ribonucleotide: step 1/1. Catalyzes the reversible adenylation of nicotinate mononucleotide (NaMN) to nicotinic acid adenine dinucleotide (NaAD). This chain is Probable nicotinate-nucleotide adenylyltransferase, found in Caulobacter sp. (strain K31).